The primary structure comprises 137 residues: Gonadotropin subunit beta-2 (137 aa).

The signal sequence occupies residues 1–24 (MLPFMLSSFLGASPSIWPLAPAEA). 6 disulfide bridges follow: cysteine 30–cysteine 76, cysteine 44–cysteine 91, cysteine 47–cysteine 129, cysteine 55–cysteine 107, cysteine 59–cysteine 109, and cysteine 112–cysteine 119. N-linked (GlcNAc...) asparagine glycosylation occurs at asparagine 34.

It belongs to the glycoprotein hormones subunit beta family. As to quaternary structure, heterodimer of an alpha and a beta chain.

It is found in the secreted. Involved in gametogenesis and steroidogenesis. This is Gonadotropin subunit beta-2 (cgbb) from Acanthopagrus latus (Yellowfin seabream).